A 347-amino-acid chain; its full sequence is Phosphoribosylformylglycinamidine cyclo-ligase (347 aa).

Belongs to the AIR synthase family.

The protein resides in the cytoplasm. It catalyses the reaction 2-formamido-N(1)-(5-O-phospho-beta-D-ribosyl)acetamidine + ATP = 5-amino-1-(5-phospho-beta-D-ribosyl)imidazole + ADP + phosphate + H(+). The protein operates within purine metabolism; IMP biosynthesis via de novo pathway; 5-amino-1-(5-phospho-D-ribosyl)imidazole from N(2)-formyl-N(1)-(5-phospho-D-ribosyl)glycinamide: step 2/2. In Prochlorococcus marinus subsp. pastoris (strain CCMP1986 / NIES-2087 / MED4), this protein is Phosphoribosylformylglycinamidine cyclo-ligase.